Reading from the N-terminus, the 395-residue chain is Envelope glycoprotein D (395 aa).

An N-terminal signal peptide occupies residues 1–17 (MGSGIAAVLLSLAVALA). Topologically, residues 18 to 342 (RVPAGEGEYV…PAPAPSGHTG (325 aa)) are virion surface. His63 contributes to the Zn(2+) binding site. Intrachain disulfides connect Cys90–Cys214, Cys131–Cys227, and Cys143–Cys152. Asn119 carries an N-linked (GlcNAc...) asparagine; by host glycan. Asp240 is a binding site for Zn(2+). The tract at residues 261-306 (LQAAGWHGPKAPFTSTLLPPEVVETANVTRPELAPEERGTSRTPGD) is profusion. Asn287 carries an N-linked (GlcNAc...) asparagine; by host glycan. Positions 289-314 (TRPELAPEERGTSRTPGDEPAPAVAA) are disordered. Residues 343 to 362 (AVVGALAGAGLAAGVVVLAV) form a helical membrane-spanning segment. Residues 363-395 (YLVRRRGRAAGKHVRLPELLEEAHGPARRGAPY) lie on the Intravirion side of the membrane.

This sequence belongs to the herpesviridae glycoprotein D family.

The protein resides in the virion membrane. Envelope glycoprotein that binds to host cell entry receptors, promoting the virus entry into host cells. May trigger fusion with host membrane, by recruiting the fusion machinery composed of gB and gH/gL. The sequence is that of Envelope glycoprotein D (gD) from Cercopithecine herpesvirus 1 (CeHV-1).